A 941-amino-acid polypeptide reads, in one-letter code: Protocadherin alpha-12 (941 aa).

An N-terminal signal peptide occupies residues 1–29 (MVIIGPRGPGSQRLLLSLLLLAAWEVGSG). 6 Cadherin domains span residues 30–133 (QLHY…PPVF), 134–242 (RERE…GPAF), 243–350 (DKPS…VPEV), 351–455 (MVTS…APAF), 456–565 (AQPE…APAL), and 581–678 (VPRS…APKT). Topologically, residues 30–697 (QLHYSVYEEA…DPEAALVDIN (668 aa)) are extracellular. 2 N-linked (GlcNAc...) asparagine glycosylation sites follow: asparagine 257 and asparagine 265. Residue asparagine 548 is glycosylated (N-linked (GlcNAc...) asparagine). A helical transmembrane segment spans residues 698 to 718 (VYLIIAICAVSSLLVLTLLLY). Residues 719–941 (TALRCSAPPT…GNSTTDNSDQ (223 aa)) are Cytoplasmic-facing. PXXP repeat units lie at residues 734–737 (PGKP), 790–793 (PRQP), 823–826 (PGGP), 863–866 (GPGN), and 882–885 (PGSP). The interval 734-885 (PGKPTLVCSS…PDKFIIPGSP (152 aa)) is 5 X 4 AA repeats of P-X-X-P. Residues 818–941 (ILRAGPGGPD…GNSTTDNSDQ (124 aa)) form a disordered region. Residues 900–914 (DKSDFITFGKKEETK) are compositionally biased toward basic and acidic residues.

It localises to the cell membrane. In terms of biological role, potential calcium-dependent cell-adhesion protein. May be involved in the establishment and maintenance of specific neuronal connections in the brain. The protein is Protocadherin alpha-12 (PCDHA12) of Pan troglodytes (Chimpanzee).